A 286-amino-acid chain; its full sequence is Apoptosis inhibitor 1 (286 aa).

BIR repeat units follow at residues 29–96 (LIER…CAYA) and 131–199 (LQSR…CYFV). 4 residues coordinate Zn(2+): Cys-169, Cys-172, His-189, and Cys-196. The RING-type zinc-finger motif lies at 238 to 274 (CKVCLERQRDAVLMPCRHFCVCVQCYFGLDQKCPTCR).

Its function is as follows. Acts by blocking cellular apoptosis early in infection. Later, stimulates caspase-3-like protease activity and induces apoptosis, probably to favor the release of occluded virions. This chain is Apoptosis inhibitor 1 (IAP1), found in Lepidoptera (butterflies and moths).